The following is a 476-amino-acid chain: MNFETTIGLEVHVELKTKSKMFSPSPVTYGQEPNTQTNVIDWGFPGVLPSINRGAYQLGIMVGLALHADITRLTHFDRKNYFYPDNPKAYQITQSEKPLGTNGWVEIEVDGKKKKIGIAELHVEEDAGKNQHEDDGYSYVDLNRQGTPLVEIVSKPDITSPEEAYAYLETLRQIVQFTGASDVKMEEGSMRVDTNLSVRPIGQEHFGTKTEIKNLNSFVHVRDGLAFEEKRQQAVLLSGGEVRQETRRWDPDAKETLLMRVKEGADDYRYFPEPDLPPVAVSQKWIDDIQASLPQPPAERRQRYIEDWGIPAYDAGVLTQTKEMSDFFEATVAQGADAKQASNWLMGEVSGFLNAQHVELGQVALTPAHLAGMIKLIGDGTISSKMAKKVFKEIIQHDTDPDKWVHEKGLIQLSDPAKLTPIIDEILDNNQQSIDDFKAGKDRAIGFLVGQIMKQTHGQANPKVVNQILMAEIKQR.

It belongs to the GatB/GatE family. GatB subfamily. As to quaternary structure, heterotrimer of A, B and C subunits.

The enzyme catalyses L-glutamyl-tRNA(Gln) + L-glutamine + ATP + H2O = L-glutaminyl-tRNA(Gln) + L-glutamate + ADP + phosphate + H(+). It carries out the reaction L-aspartyl-tRNA(Asn) + L-glutamine + ATP + H2O = L-asparaginyl-tRNA(Asn) + L-glutamate + ADP + phosphate + 2 H(+). Allows the formation of correctly charged Asn-tRNA(Asn) or Gln-tRNA(Gln) through the transamidation of misacylated Asp-tRNA(Asn) or Glu-tRNA(Gln) in organisms which lack either or both of asparaginyl-tRNA or glutaminyl-tRNA synthetases. The reaction takes place in the presence of glutamine and ATP through an activated phospho-Asp-tRNA(Asn) or phospho-Glu-tRNA(Gln). In Lacticaseibacillus casei (strain BL23) (Lactobacillus casei), this protein is Aspartyl/glutamyl-tRNA(Asn/Gln) amidotransferase subunit B.